Consider the following 287-residue polypeptide: Ret finger protein-like 4A (287 aa).

Residues 11–53 (CYFCFRCLESPVYLNCGYICCLKCLDSLEKSPEGDGVLCPTCS) form an RING-type; degenerate zinc finger. The region spanning 78-278 (EPQLNFILTM…LSICPVTNPG (201 aa)) is the B30.2/SPRY domain.

Interacts with PSMB1, UBE2A and CCNB1. In terms of tissue distribution, expressed in the ovaries and oocytes (at protein level). Expression restricted to gonads. In testis, present at later stages of spermatogeneis and abundant in elongating spermatids.

It is found in the cytoplasm. It localises to the nucleus. This Mus musculus (Mouse) protein is Ret finger protein-like 4A (Rfpl4a).